The chain runs to 115 residues: Large ribosomal subunit protein bL20 (115 aa).

The protein belongs to the bacterial ribosomal protein bL20 family.

Binds directly to 23S ribosomal RNA and is necessary for the in vitro assembly process of the 50S ribosomal subunit. It is not involved in the protein synthesizing functions of that subunit. The sequence is that of Large ribosomal subunit protein bL20 from Myxococcus xanthus (strain DK1622).